The chain runs to 471 residues: 3-isopropylmalate dehydratase large subunit (471 aa).

Residues cysteine 347, cysteine 409, and cysteine 412 each contribute to the [4Fe-4S] cluster site.

This sequence belongs to the aconitase/IPM isomerase family. LeuC type 1 subfamily. In terms of assembly, heterodimer of LeuC and LeuD. [4Fe-4S] cluster serves as cofactor.

The enzyme catalyses (2R,3S)-3-isopropylmalate = (2S)-2-isopropylmalate. Its pathway is amino-acid biosynthesis; L-leucine biosynthesis; L-leucine from 3-methyl-2-oxobutanoate: step 2/4. Its function is as follows. Catalyzes the isomerization between 2-isopropylmalate and 3-isopropylmalate, via the formation of 2-isopropylmaleate. The polypeptide is 3-isopropylmalate dehydratase large subunit (Buchnera aphidicola subsp. Rhopalosiphum padi).